A 376-amino-acid polypeptide reads, in one-letter code: Heterodimeric geranylgeranyl pyrophosphate synthase large subunit 2 (376 aa).

Residues 1 to 24 (MEPQILFLYLSLFILSLNFFFTNL) form the signal peptide. The isopentenyl diphosphate site is built by Lys125, Arg128, and His157. Residues Asp164 and Asp170 each contribute to the Mg(2+) site. Residue Arg175 coordinates dimethylallyl diphosphate. Arg176 serves as a coordination point for isopentenyl diphosphate. Residues Lys261, Thr262, Gln299, Lys316, and Lys326 each contribute to the dimethylallyl diphosphate site.

Belongs to the FPP/GGPP synthase family. As to quaternary structure, monomer. Part of a heterodimeric geranyl(geranyl)diphosphate synthase. Interacts with GGR. It depends on Mg(2+) as a cofactor. Mainly expressed in flowers.

It is found in the endoplasmic reticulum. It catalyses the reaction isopentenyl diphosphate + dimethylallyl diphosphate = (2E)-geranyl diphosphate + diphosphate. The enzyme catalyses isopentenyl diphosphate + (2E)-geranyl diphosphate = (2E,6E)-farnesyl diphosphate + diphosphate. The catalysed reaction is isopentenyl diphosphate + (2E,6E)-farnesyl diphosphate = (2E,6E,10E)-geranylgeranyl diphosphate + diphosphate. It participates in isoprenoid biosynthesis; farnesyl diphosphate biosynthesis; farnesyl diphosphate from geranyl diphosphate and isopentenyl diphosphate: step 1/1. It functions in the pathway isoprenoid biosynthesis; geranyl diphosphate biosynthesis; geranyl diphosphate from dimethylallyl diphosphate and isopentenyl diphosphate: step 1/1. The protein operates within isoprenoid biosynthesis; geranylgeranyl diphosphate biosynthesis; geranylgeranyl diphosphate from farnesyl diphosphate and isopentenyl diphosphate: step 1/1. In terms of biological role, heterodimeric geranyl(geranyl)-diphosphate (GPP) synthase large subunit. In vitro, the large subunit catalyzes mainly the trans-addition of the three molecules of IPP onto DMAPP to form geranylgeranyl pyrophosphate while the small subunit alone is inactive. Upon association of the two subunits, the product profile is not changed. This chain is Heterodimeric geranylgeranyl pyrophosphate synthase large subunit 2 (GGPPS2), found in Arabidopsis thaliana (Mouse-ear cress).